A 572-amino-acid polypeptide reads, in one-letter code: MANIVWCNIAMFLLVSLFLTDDAVVVLDALDNVPNNIKNQPYRTGYHFQPPKNWMNDPNGPMIYKGIYHLFYQWNQNGAVMDVNKTVWGHATSTDLINWITLSPAIRPSRPSDINGCWSGSVTILPNGKPVILYTGNDRYNRQVQNLVKPKNLTDPYLRHWTKSPENPLVTPSPVNHINSSAFRDPTTAWFGRDGRWRITTGSQEGRRGLAILHTSKDFVIWKQSPKPLHYHDGTGMWECPDFFPVARTDSRGLDTSFSSGPMVKHVLKVSLTDTFNDYYTIGTYDEVRDVYVPDKGFVQDETAPRYDYGKFYASKTFYDSVNQRRILWGWVNESSPEKDNIKKGWAGLQAIPRKVWLDESGKRLVQWPVKEIERLRTTQVKWGNKLLKGGSVMEVHGVTAPQADVEVFFKVSGFDLEKADVIEPGWTDPQLICSQRNASSGLGPFGLMVLASKNMEEYTSVNIRIFRAGENSKEHVVVMCSDQSTSSLEKGNDKTTYGAFLDISPYQPISLRTLIDKSIVESFGGKGKTCITSRVYPKLAIGERTHLFAFNKGSQNVNVLSLSAWSMKSSL.

The signal sequence occupies residues 1 to 23; that stretch reads MANIVWCNIAMFLLVSLFLTDDA. Residues 54 to 57 and Gln73 each bind substrate; that span reads WMND. Residue Asp57 is part of the active site. The N-linked (GlcNAc...) asparagine glycan is linked to Asn84. Position 118–119 (118–119) interacts with substrate; sequence WS. 2 N-linked (GlcNAc...) asparagine glycosylation sites follow: Asn152 and Asn179. Residues 184-185 and Glu239 each bind substrate; that span reads RD. 2 N-linked (GlcNAc...) asparagine glycosylation sites follow: Asn333 and Asn438. Cys434 and Cys481 are oxidised to a cystine.

It belongs to the glycosyl hydrolase 32 family. Expressed in flowers, and, to a lower extent, in leaves.

The protein localises to the secreted. It localises to the extracellular space. It is found in the apoplast. Its subcellular location is the cell wall. It carries out the reaction Hydrolysis of terminal non-reducing beta-D-fructofuranoside residues in beta-D-fructofuranosides.. The chain is Beta-fructofuranosidase, insoluble isoenzyme CWINV5 (CWINV5) from Arabidopsis thaliana (Mouse-ear cress).